The chain runs to 391 residues: Serine protease 7 (391 aa).

A signal peptide spans methionine 1–alanine 27. A propeptide spans glutamine 28–lysine 136 (activation peptide). Positions serine 30–cysteine 84 constitute a Clip domain. 3 disulfides stabilise this stretch: cysteine 31–cysteine 83, cysteine 41–cysteine 72, and cysteine 47–cysteine 84. The disordered stretch occupies residues glycine 91–leucine 121. Intrachain disulfides connect cysteine 128–cysteine 264, cysteine 167–cysteine 183, cysteine 211–cysteine 216, cysteine 310–cysteine 327, and cysteine 337–cysteine 366. Residues valine 137–arginine 390 form the Peptidase S1 domain. An N-linked (GlcNAc...) asparagine glycan is attached at asparagine 141. Histidine 182 functions as the Charge relay system in the catalytic mechanism. Residues glutamate 202, aspartate 204, lysine 207, and aspartate 210 each contribute to the Ca(2+) site. Catalysis depends on aspartate 244, which acts as the Charge relay system. Catalysis depends on serine 341, which acts as the Charge relay system.

The protein belongs to the peptidase S1 family. CLIP subfamily. In terms of assembly, interacts with Spn27A.

The protein localises to the secreted. In terms of biological role, serine protease that, by cleaving and activating prophenoloxidase (PPO1) after immune challenge, plays an essential role in the melanization immune response to septic wounding. May function in diverse Hayan-dependent PPO1-activating cascades that are negatively controlled by different serpin proteins; Spn27A in the hemolymph and Spn77BA in the trachea. Important for the innate immune response to fungi. Regulation of melanization and PPO1 activation appears to be largely independent of the Toll signaling pathway. This chain is Serine protease 7, found in Drosophila melanogaster (Fruit fly).